Reading from the N-terminus, the 977-residue chain is 2-oxoglutarate dehydrogenase E1 component (977 aa).

Positions 77 to 125 (VLNNRHLAKPAYREEFKGDTERSTAAYIDIREDASTGSTSKLPLEAKFG) constitute an RPE1 insert domain.

Belongs to the alpha-ketoglutarate dehydrogenase family. In terms of assembly, homodimer. Part of the 2-oxoglutarate dehydrogenase (OGDH) complex composed of E1 (2-oxoglutarate dehydrogenase), E2 (dihydrolipoamide succinyltransferase) and E3 (dihydrolipoamide dehydrogenase); the complex contains multiple copies of the three enzymatic components (E1, E2 and E3). Thiamine diphosphate is required as a cofactor.

The enzyme catalyses N(6)-[(R)-lipoyl]-L-lysyl-[protein] + 2-oxoglutarate + H(+) = N(6)-[(R)-S(8)-succinyldihydrolipoyl]-L-lysyl-[protein] + CO2. E1 component of the 2-oxoglutarate dehydrogenase (OGDH) complex which catalyzes the decarboxylation of 2-oxoglutarate, the first step in the conversion of 2-oxoglutarate to succinyl-CoA and CO(2). This is 2-oxoglutarate dehydrogenase E1 component (sucA) from Rickettsia felis (strain ATCC VR-1525 / URRWXCal2) (Rickettsia azadi).